The chain runs to 118 residues: Small ribosomal subunit protein mS37 (118 aa).

The 43-residue stretch at 42 to 84 folds into the CHCH domain; that stretch reads EATCITEMSMMMACWKQNEFRDEACRKEIQDFFDCSSRAQEAR. 2 consecutive short sequence motifs (cx9C motif) follow at residues 45-55 and 66-76; these read CITEMSMMMAC and CRKEIQDFFDC. 2 disulfide bridges follow: Cys45-Cys76 and Cys55-Cys66. Positions 86 to 105 are disordered; sequence MRSIQESLGQSESLSPHKMT. Residues 89-99 are compositionally biased toward polar residues; that stretch reads IQESLGQSESL.

It belongs to the mitochondrion-specific ribosomal protein mS37 family. Component of the mitochondrial ribosome small subunit (28S) which comprises a 12S rRNA and about 30 distinct proteins.

The protein localises to the mitochondrion. It is found in the nucleus. This Mus musculus (Mouse) protein is Small ribosomal subunit protein mS37 (Chchd1).